The chain runs to 951 residues: Serine/threonine-protein phosphatase 4 regulatory subunit 1 (951 aa).

7 HEAT repeats span residues 26–63 (ESDVIIIPSALDFVSQDEMLTPLGRLDKYAASENVFNR), 82–119 (RDCIAVLERISRLADDSEPTVRAELMEQVPHIALFCQE), 127–164 (AFSKYLLPIVVRYLADQNNQVRKTSQAALLALLEQELI), 168–206 (DVETKVCPVLIDLTAPDSNDDVKTEAVAIMCKMAPMVGK), 208–246 (ITERLILPRFCEMCCDCRMFHVRKVCAANFGDICSVVGQ), 248–285 (ATEEMLLPRFFQLCSDNVWGVRKACAECFMAVSCATCQ), and 287–324 (IRRTKLSALFINLISDPSRWVRQAAFQSLGPFISTFAN). Disordered stretches follow at residues 326–395 (SSSG…DMRV), 407–501 (SESP…MATR), 539–569 (HDEAGGAEQRSELQDDAVGAGGELPNCSISE), and 592–612 (GGADVGPGGGGGFSPDEERRP). Basic and acidic residues-rich tracts occupy residues 332 to 360 (FKDESKSSEDKDRIRDDGVVQEEQSRPED), 464 to 483 (DLDKELQQDPGERPSPERTG), and 539 to 551 (HDEAGGAEQRSEL). One copy of the HEAT 8 repeat lies at 502–539 (KELEEMIENLEPHMDDPDVKAQVEVLSAALRASTLDAH). A compositionally biased stretch (gly residues) spans 594 to 604 (ADVGPGGGGGF). HEAT repeat units follow at residues 699–735 (LTAADLVPIFNGFLKDLDEVRIGVLKHLHDFLKLLHI), 777–815 (RDVYDYLRPIALNLCADKVSSVRWISYKLVSEMVKKLHM), 820–858 (TFGVELINELVENFGRCPKWSGRQAFVFVCQTVIEDDCL), and 862–899 (QFAVHLMPHLLTLANDRVPNVRVLLAKTLRQTLLEKEY). The residue at position 936 (Ser-936) is a Phosphoserine.

In terms of assembly, serine/threonine-protein phosphatase 4 (PP4) occurs in different assemblies of the catalytic and one or more regulatory subunits. Component of the PP4 complex PPP4C-PPP4R1. Interacts with HDAC3.

Functionally, regulatory subunit of serine/threonine-protein phosphatase 4. May play a role in regulation of cell division in renal glomeruli. The PPP4C-PPP4R1 PP4 complex may play a role in dephosphorylation and regulation of HDAC3. Plays a role in the inhibition of TNF-induced NF-kappa-B activation by regulating the dephosphorylation of TRAF2. The sequence is that of Serine/threonine-protein phosphatase 4 regulatory subunit 1 (Ppp4r1) from Rattus norvegicus (Rat).